Here is a 433-residue protein sequence, read N- to C-terminus: Trigger factor (433 aa).

The region spanning 163–248 is the PPIase FKBP-type domain; the sequence is GNFVVIDFVG…VKEAKVKELP (86 aa).

The protein belongs to the FKBP-type PPIase family. Tig subfamily.

The protein localises to the cytoplasm. It carries out the reaction [protein]-peptidylproline (omega=180) = [protein]-peptidylproline (omega=0). Functionally, involved in protein export. Acts as a chaperone by maintaining the newly synthesized protein in an open conformation. Functions as a peptidyl-prolyl cis-trans isomerase. The protein is Trigger factor of Geobacter metallireducens (strain ATCC 53774 / DSM 7210 / GS-15).